We begin with the raw amino-acid sequence, 443 residues long: Nuclear distribution protein nudF (443 aa).

Residues 9 to 41 form the LisH domain; that stretch reads QAEELHKSIIAYLSSINASRSCEVLREELQVDS. The stretch at 60 to 87 forms a coiled coil; sequence TGIARLQKKILDLESKLAGLQTELDTIS. WD repeat units lie at residues 111 to 152, 154 to 194, 198 to 238, 241 to 280, 283 to 343, 345 to 384, 388 to 427, and 429 to 443; these read SHRD…RTLK, HMRP…ANVR, GHDH…CVKV, SQGS…SVAS, GHEN…IKTL, GHDN…RLVK, AHGH…PGFQ, and VIAT…RIFT.

The protein belongs to the WD repeat LIS1/nudF family. As to quaternary structure, self-associates. Interacts with nudE and dynein.

The protein resides in the cytoplasm. It is found in the cytoskeleton. The protein localises to the spindle pole. Positively regulates the activity of the minus-end directed microtubule motor protein dynein. May enhance dynein-mediated microtubule sliding by targeting dynein to the microtubule plus end. Required for nuclear migration during vegetative growth as well as development. Required for retrograde early endosome (EE) transport from the hyphal tip. Required for localization of dynein to the mitotic spindle poles. Recruits additional proteins to the dynein complex at SPBs. This Aspergillus niger (strain ATCC MYA-4892 / CBS 513.88 / FGSC A1513) protein is Nuclear distribution protein nudF.